We begin with the raw amino-acid sequence, 617 residues long: Proline--tRNA ligase (617 aa).

This sequence belongs to the class-II aminoacyl-tRNA synthetase family. ProS type 1 subfamily. Homodimer.

It localises to the cytoplasm. The catalysed reaction is tRNA(Pro) + L-proline + ATP = L-prolyl-tRNA(Pro) + AMP + diphosphate. Functionally, catalyzes the attachment of proline to tRNA(Pro) in a two-step reaction: proline is first activated by ATP to form Pro-AMP and then transferred to the acceptor end of tRNA(Pro). As ProRS can inadvertently accommodate and process non-cognate amino acids such as alanine and cysteine, to avoid such errors it has two additional distinct editing activities against alanine. One activity is designated as 'pretransfer' editing and involves the tRNA(Pro)-independent hydrolysis of activated Ala-AMP. The other activity is designated 'posttransfer' editing and involves deacylation of mischarged Ala-tRNA(Pro). The misacylated Cys-tRNA(Pro) is not edited by ProRS. The protein is Proline--tRNA ligase of Streptococcus pneumoniae serotype 19F (strain G54).